The chain runs to 503 residues: Lysine--tRNA ligase (503 aa).

Residues E413 and E420 each coordinate Mg(2+).

The protein belongs to the class-II aminoacyl-tRNA synthetase family. As to quaternary structure, homodimer. Requires Mg(2+) as cofactor.

The protein localises to the cytoplasm. The catalysed reaction is tRNA(Lys) + L-lysine + ATP = L-lysyl-tRNA(Lys) + AMP + diphosphate. This Actinobacillus succinogenes (strain ATCC 55618 / DSM 22257 / CCUG 43843 / 130Z) protein is Lysine--tRNA ligase.